The primary structure comprises 432 residues: uncharacterized protein (432 aa).

3 disordered regions span residues 37–61 (DGIG…SADC), 127–151 (RDHD…DTRY), and 298–378 (SVSS…NHQC). Residues 312 to 335 (DSSTLANTQGFREDQSQQQHTPSP) are compositionally biased toward polar residues. Positions 341–366 (SSLSHQFHQSIHQSHQHHQSIYQSQH) are enriched in low complexity.

This is an uncharacterized protein from Arabidopsis thaliana (Mouse-ear cress).